The primary structure comprises 496 residues: Pituitary adenylate cyclase-activating polypeptide type I receptor (496 aa).

Positions 1–20 (MARTLQLSLTALLLLPMAIA) are cleaved as a signal peptide. At 21–152 (MHSDCIFKKE…SGDQDYYYLS (132 aa)) the chain is on the extracellular side. 3 disulfide bridges follow: Cys-34–Cys-63, Cys-54–Cys-118, and Cys-77–Cys-134. 3 N-linked (GlcNAc...) asparagine glycosylation sites follow: Asn-48, Asn-60, and Asn-117. Residues 125–139 (EPFPHYFDACGFDDY) form an important for ADCYAP1/PACAP ligand binding and specificity region. The interval 125–139 (EPFPHYFDACGFDDY) is important for ligand binding and specificity. A helical membrane pass occupies residues 153-177 (VKALYTVGYSTSLVTLTTAMVILCR). Topologically, residues 178–187 (FRKLHCTRNF) are cytoplasmic. The chain crosses the membrane as a helical span at residues 188 to 208 (IHMNLFVSFMLRAISVFIKDW). The Extracellular segment spans residues 209-223 (ILYAEQDSSHCFVST). Residues 224–249 (VECKAVMVFFHYCVVSNYFWLFIEGL) traverse the membrane as a helical segment. Cys-226 and Cys-296 form a disulfide bridge. The Cytoplasmic segment spans residues 250–267 (YLFTLLVETFFPERRYFY). A helical membrane pass occupies residues 268 to 290 (WYTIIGWGTPTVCVTVWAVLRLY). The Extracellular segment spans residues 291 to 302 (FDDAGCWDMNDS). A helical transmembrane segment spans residues 303-329 (TALWWVIKGPVVGSIMVNFVLFIGIII). Residues 330–347 (ILVQKLQSPDMGGNESSI) are Cytoplasmic-facing. Residues 348–402 (YFSCVQKCYCKPQRAQQHSCKMSELSTITLRLARSTLLLIPLFGIHYTVFAFSPE) traverse the membrane as a helical segment. Topologically, residues 403 to 407 (NVSKR) are extracellular. A helical transmembrane segment spans residues 408 to 431 (ERLVFELGLGSFQGFVVAVLYCFL). Over 432–496 (NGEVQAEIKR…SSLPADNLAT (65 aa)) the chain is Cytoplasmic. Residues Ser-462 and Ser-475 each carry the phosphoserine modification.

It belongs to the G-protein coupled receptor 2 family. As to quaternary structure, interacts with maxadilan, a vasodilator peptide from Lutzomyia longipalpis saliva; the interaction results in ADCYAP1R1 activation.

The protein localises to the cell membrane. In terms of biological role, g protein-coupled receptor activated by the neuropeptide pituitary adenylate cyclase-activating polypeptide (ADCYAP1/PACAP). Binds both PACAP27 and PACAP38 bioactive peptides. Ligand binding causes a conformation change that triggers signaling via guanine nucleotide-binding proteins (G proteins) and modulates the activity of downstream effectors. Activates cAMP-dependent pathway. May regulate the release of adrenocorticotropin, luteinizing hormone, growth hormone, prolactin, epinephrine, and catecholamine. May play a role in spermatogenesis and sperm motility. Causes smooth muscle relaxation and secretion in the gastrointestinal tract. The sequence is that of Pituitary adenylate cyclase-activating polypeptide type I receptor from Mus musculus (Mouse).